Here is a 208-residue protein sequence, read N- to C-terminus: Small ribosomal subunit protein uS4 (208 aa).

The S4 RNA-binding domain occupies 97 to 160 (SRLDNIVFRL…KKNDKIAEAL (64 aa)).

The protein belongs to the universal ribosomal protein uS4 family. Part of the 30S ribosomal subunit. Contacts protein S5. The interaction surface between S4 and S5 is involved in control of translational fidelity.

One of the primary rRNA binding proteins, it binds directly to 16S rRNA where it nucleates assembly of the body of the 30S subunit. In terms of biological role, with S5 and S12 plays an important role in translational accuracy. The chain is Small ribosomal subunit protein uS4 from Mesoplasma florum (strain ATCC 33453 / NBRC 100688 / NCTC 11704 / L1) (Acholeplasma florum).